The sequence spans 435 residues: Trigger factor (435 aa).

The PPIase FKBP-type domain maps to 162–247 (GDRINIDYRG…LSGVESSKLP (86 aa)).

This sequence belongs to the FKBP-type PPIase family. Tig subfamily.

The protein resides in the cytoplasm. It carries out the reaction [protein]-peptidylproline (omega=180) = [protein]-peptidylproline (omega=0). Involved in protein export. Acts as a chaperone by maintaining the newly synthesized protein in an open conformation. Functions as a peptidyl-prolyl cis-trans isomerase. The protein is Trigger factor of Nitrosospira multiformis (strain ATCC 25196 / NCIMB 11849 / C 71).